Here is a 556-residue protein sequence, read N- to C-terminus: Glypican-4 (556 aa).

The first 18 residues, 1–18, serve as a signal peptide directing secretion; sequence MARFGLPALLCTLAVLSA. Serine 357 carries the phosphoserine modification. 3 O-linked (Xyl...) (glycosaminoglycan) serine glycosylation sites follow: serine 494, serine 498, and serine 500. N-linked (GlcNAc...) asparagine glycosylation is present at asparagine 514. A lipid anchor (GPI-anchor amidated serine) is attached at serine 529. The propeptide at 530–556 is removed in mature form; that stretch reads AGVRPGAQAYLLTVFCILFLVMQREWR.

The protein belongs to the glypican family.

It is found in the cell membrane. The protein resides in the secreted. It localises to the extracellular space. Its function is as follows. Cell surface proteoglycan that bears heparan sulfate. May be involved in the development of kidney tubules and of the central nervous system. This Homo sapiens (Human) protein is Glypican-4 (GPC4).